The primary structure comprises 463 residues: Endoglucanase (463 aa).

A signal peptide spans 1–27 (MVEKRKIFTVLCACGIGFTSYTSCISA). The propeptide occupies 28 to 55 (AAIDNDTLINNGHKINSSIITNSSQVSA). Glu130 acts as the Proton donor in catalysis. The Nucleophile role is filled by Asp191.

The protein belongs to the glycosyl hydrolase 8 (cellulase D) family. Post-translationally, the N- and the C-terminus may be subjected to proteolysis.

The catalysed reaction is Endohydrolysis of (1-&gt;4)-beta-D-glucosidic linkages in cellulose, lichenin and cereal beta-D-glucans.. This chain is Endoglucanase, found in Bacillus sp. (strain KSM-330).